The following is a 359-amino-acid chain: Protein Wnt-5a (359 aa).

The signal sequence occupies residues 1-20 (MASRYLTLAAALLASFLQVD). The cysteines at positions 83 and 94 are disulfide-linked. 2 N-linked (GlcNAc...) asparagine glycosylation sites follow: asparagine 93 and asparagine 99. Disulfide bonds link cysteine 133–cysteine 141, cysteine 143–cysteine 161, cysteine 217–cysteine 231, cysteine 219–cysteine 226, cysteine 288–cysteine 319, cysteine 304–cysteine 314, cysteine 318–cysteine 358, cysteine 334–cysteine 349, cysteine 336–cysteine 346, and cysteine 341–cysteine 342. Residue serine 223 is the site of O-palmitoleoyl serine; by PORCN attachment. N-linked (GlcNAc...) asparagine glycans are attached at residues asparagine 291 and asparagine 305.

The protein belongs to the Wnt family. Post-translationally, palmitoleoylation is required for efficient binding to frizzled receptors. Depalmitoleoylation leads to Wnt signaling pathway inhibition.

Its subcellular location is the secreted. The protein resides in the extracellular space. It is found in the extracellular matrix. In terms of biological role, ligand for members of the frizzled family of seven transmembrane receptors. Can activate or inhibit canonical Wnt signaling, depending on receptor context. Required during embryogenesis for extension of the primary anterior-posterior axis. This is Protein Wnt-5a (WNT5A) from Pleurodeles waltl (Iberian ribbed newt).